The following is a 382-amino-acid chain: Carbamoyl phosphate synthase small chain (382 aa).

The CPSase stretch occupies residues 1–189 (MIKSALLVLE…GLPEAKKEDE (189 aa)). L-glutamine contacts are provided by Ser-47, Gly-241, and Gly-243. One can recognise a Glutamine amidotransferase type-1 domain in the interval 193 to 380 (HVVAYDFGAK…IELIEQYRKT (188 aa)). The active-site Nucleophile is the Cys-269. Residues Leu-270, Gln-273, Asn-311, Gly-313, and Phe-314 each contribute to the L-glutamine site. Catalysis depends on residues His-353 and Glu-355.

Belongs to the CarA family. In terms of assembly, composed of two chains; the small (or glutamine) chain promotes the hydrolysis of glutamine to ammonia, which is used by the large (or ammonia) chain to synthesize carbamoyl phosphate. Tetramer of heterodimers (alpha,beta)4.

The enzyme catalyses hydrogencarbonate + L-glutamine + 2 ATP + H2O = carbamoyl phosphate + L-glutamate + 2 ADP + phosphate + 2 H(+). It carries out the reaction L-glutamine + H2O = L-glutamate + NH4(+). It participates in amino-acid biosynthesis; L-arginine biosynthesis; carbamoyl phosphate from bicarbonate: step 1/1. Its pathway is pyrimidine metabolism; UMP biosynthesis via de novo pathway; (S)-dihydroorotate from bicarbonate: step 1/3. Its function is as follows. Small subunit of the glutamine-dependent carbamoyl phosphate synthetase (CPSase). CPSase catalyzes the formation of carbamoyl phosphate from the ammonia moiety of glutamine, carbonate, and phosphate donated by ATP, constituting the first step of 2 biosynthetic pathways, one leading to arginine and/or urea and the other to pyrimidine nucleotides. The small subunit (glutamine amidotransferase) binds and cleaves glutamine to supply the large subunit with the substrate ammonia. In Escherichia coli O157:H7, this protein is Carbamoyl phosphate synthase small chain.